A 273-amino-acid polypeptide reads, in one-letter code: Large ribosomal subunit protein uL2cy (273 aa).

Disordered stretches follow at residues 1 to 27 (MAIH…SNPR) and 224 to 273 (NPVD…RRRK).

Belongs to the universal ribosomal protein uL2 family. In terms of assembly, part of the 50S ribosomal subunit.

Its subcellular location is the plastid. It localises to the chloroplast. This is Large ribosomal subunit protein uL2cy (rpl2-B) from Liriodendron tulipifera (Tuliptree).